Reading from the N-terminus, the 135-residue chain is MNYFLKAPILGFEHINEVRLEKIDSLFSRLMGQTNSPMALDMVLVNPYCLREYSFVIPKYIELLLELDSHSKVEVYCVVVLQKNLEDSMVNFLAPLVFNSKNGFGAQVALSMMDYPDFGFRDPLKSFVVKERERA.

It belongs to the FliW family. In terms of assembly, interacts with translational regulator CsrA and flagellin(s).

It localises to the cytoplasm. Acts as an anti-CsrA protein, binds CsrA and prevents it from repressing translation of its target genes, one of which is flagellin. Binds to flagellin and participates in the assembly of the flagellum. The protein is Flagellar assembly factor FliW 1 of Helicobacter pylori (strain HPAG1).